Consider the following 260-residue polypeptide: Zinc finger protein 575 (260 aa).

The tract at residues 22–81 is disordered; sequence PGLGPGRWLLPGAHQPSCPPAPHQGPLQKPSQSAPGPTASASAPPRPRRRPPPQRPHRCP. Residues 51–64 show a composition bias toward low complexity; sequence PSQSAPGPTASASA. The segment covering 67–78 has biased composition (basic residues); the sequence is RPRRRPPPQRPH. 6 consecutive C2H2-type zinc fingers follow at residues 78 to 100, 106 to 128, 134 to 156, 162 to 184, 192 to 214, and 228 to 255; these read HRCP…RLAH, HPCP…RLTH, HPCP…LWTH, YPCP…RHTH, YPCP…RLCH, and HRCS…QVEH.

It belongs to the krueppel C2H2-type zinc-finger protein family.

It is found in the nucleus. May be involved in transcriptional regulation. In Macaca fascicularis (Crab-eating macaque), this protein is Zinc finger protein 575 (ZNF575).